The following is a 502-amino-acid chain: Glycerol kinase (502 aa).

ADP is bound at residue threonine 14. ATP contacts are provided by threonine 14, threonine 15, and serine 16. Threonine 14 contacts sn-glycerol 3-phosphate. Arginine 18 serves as a coordination point for ADP. Arginine 84, glutamate 85, tyrosine 136, and aspartate 246 together coordinate sn-glycerol 3-phosphate. Arginine 84, glutamate 85, tyrosine 136, aspartate 246, and glutamine 247 together coordinate glycerol. ADP-binding residues include threonine 268 and glycine 311. ATP contacts are provided by threonine 268, glycine 311, glutamine 315, and glycine 412. ADP is bound by residues glycine 412 and asparagine 416.

It belongs to the FGGY kinase family. As to quaternary structure, homotetramer and homodimer (in equilibrium). Heterodimer with EIIA-Glc. Binds 1 zinc ion per glycerol kinase EIIA-Glc dimer. The zinc ion is important for dimerization.

The catalysed reaction is glycerol + ATP = sn-glycerol 3-phosphate + ADP + H(+). It participates in polyol metabolism; glycerol degradation via glycerol kinase pathway; sn-glycerol 3-phosphate from glycerol: step 1/1. With respect to regulation, activity of this regulatory enzyme is affected by several metabolites. Allosterically and non-competitively inhibited by fructose 1,6-bisphosphate (FBP) and unphosphorylated phosphocarrier protein EIIA-Glc (III-Glc), an integral component of the bacterial phosphotransferase (PTS) system. Functionally, key enzyme in the regulation of glycerol uptake and metabolism. Catalyzes the phosphorylation of glycerol to yield sn-glycerol 3-phosphate. This Salmonella typhimurium (strain LT2 / SGSC1412 / ATCC 700720) protein is Glycerol kinase.